A 194-amino-acid chain; its full sequence is Peptidyl-tRNA hydrolase (194 aa).

Residue Tyr17 participates in tRNA binding. The active-site Proton acceptor is the His22. The tRNA site is built by Phe68, Asn70, and Asn116.

The protein belongs to the PTH family. Monomer.

It localises to the cytoplasm. The catalysed reaction is an N-acyl-L-alpha-aminoacyl-tRNA + H2O = an N-acyl-L-amino acid + a tRNA + H(+). Hydrolyzes ribosome-free peptidyl-tRNAs (with 1 or more amino acids incorporated), which drop off the ribosome during protein synthesis, or as a result of ribosome stalling. In terms of biological role, catalyzes the release of premature peptidyl moieties from peptidyl-tRNA molecules trapped in stalled 50S ribosomal subunits, and thus maintains levels of free tRNAs and 50S ribosomes. This chain is Peptidyl-tRNA hydrolase, found in Haemophilus ducreyi (strain 35000HP / ATCC 700724).